The sequence spans 445 residues: Inward rectifier potassium channel 4 (445 aa).

Over 1–55 the chain is Cytoplasmic; sequence MHGHSRNGQAHVPRRKRRNRFVKKNGQCNVYFANLSNKSQRYMADIFTTCVDTRW. A helical membrane pass occupies residues 56 to 80; sequence RYMLMIFSAAFLVSWLFFGLLFWCI. The Extracellular portion of the chain corresponds to 81–120; the sequence is AFFHGDLEASPGVPAAGGPAAGGGGAAPVAPKPCIMHVNG. Residues 91-111 are val/Gly/Ala/Pro stretch; it reads PGVPAAGGPAAGGGGAAPVAP. Residues 121–132 constitute an intramembrane region (helical; Pore-forming); it reads FLGAFLFSVETQ. The segment at residues 133 to 139 is an intramembrane region (pore-forming); sequence TTIGYGF. Positions 134 to 139 match the Selectivity filter motif; the sequence is TIGYGF. Over 140–148 the chain is Extracellular; that stretch reads RCVTEECPL. A helical transmembrane segment spans residues 149-170; it reads AVIAVVVQSIVGCVIDSFMIGT. Residues 171–445 are Cytoplasmic-facing; sequence IMAKMARPKK…NISYRRESAI (275 aa). Positions 443–445 match the PDZ-binding motif; sequence SAI.

This sequence belongs to the inward rectifier-type potassium channel (TC 1.A.2.1) family. KCNJ4 subfamily. Homomultimeric and heteromultimeric association with KCNJ2 and KCNJ12. Interacts with DLG2 and DLG4. Associates, via its PDZ-recognition domain, with a complex containing LIN7A, LIN7B, LIN7C, DLG1, CASK and APBA1. Interacts with TAX1BP3. TAX1BP3 competes with LIN7 family members for KCNJ4 binding. In terms of tissue distribution, heart, skeletal muscle, and several different brain regions including the hippocampus.

It is found in the cell membrane. Its subcellular location is the postsynaptic cell membrane. It localises to the cytoplasmic vesicle membrane. It catalyses the reaction K(+)(in) = K(+)(out). Its function is as follows. Inward rectifier potassium channels are characterized by a greater tendency to allow potassium to flow into the cell rather than out of it. Their voltage dependence is regulated by the concentration of extracellular potassium; as external potassium is raised, the voltage range of the channel opening shifts to more positive voltages. The inward rectification is mainly due to the blockage of outward current by internal magnesium. Can be blocked by extracellular barium and cesium. This Homo sapiens (Human) protein is Inward rectifier potassium channel 4 (KCNJ4).